Consider the following 241-residue polypeptide: Venom nerve growth factor (241 aa).

Positions 1–18 (MSMLCYTLIIAFLIGIWA) are cleaved as a signal peptide. The propeptide occupies 19-122 (APKSEDNVPL…SLNRNIRAKR (104 aa)). 3 disulfides stabilise this stretch: cysteine 136–cysteine 201, cysteine 179–cysteine 229, and cysteine 189–cysteine 231. Asparagine 145 is a glycosylation site (N-linked (GlcNAc...) asparagine).

It belongs to the NGF-beta family. As to quaternary structure, homodimer; non-covalently linked. Expressed by the venom gland.

It is found in the secreted. In terms of biological role, nerve growth factor is important for the development and maintenance of the sympathetic and sensory nervous systems. It stimulates division and differentiation of sympathetic and embryonic sensory neurons as well as basal forebrain cholinergic neurons in the brain. Its relevance in the snake venom is not clear. However, it has been shown to inhibit metalloproteinase-dependent proteolysis of platelet glycoprotein Ib alpha, suggesting a metalloproteinase inhibition to prevent metalloprotease autodigestion and/or protection against prey proteases. Binds a lipid between the two protein chains in the homodimer. The lipid-bound form promotes histamine relase from mouse mast cells, contrary to the lipid-free form. The polypeptide is Venom nerve growth factor (Crotalus durissus terrificus (South American rattlesnake)).